Consider the following 465-residue polypeptide: Sodium-coupled neutral amino acid transporter 7 (465 aa).

A run of 11 helical transmembrane segments spans residues 54 to 74 (AVFI…PAAF), 82 to 102 (AGVT…VILA), 128 to 148 (ICEL…LIII), 177 to 197 (FTIT…KEIG), 204 to 224 (TLSV…YIWP), 244 to 264 (FNAM…VPVF), 275 to 295 (WWGV…GTGV), 318 to 338 (VAVA…YPIL), 370 to 390 (ILQT…IPDI), 394 to 414 (ISLI…LCLI), and 427 to 447 (SWNA…FIFG).

The protein belongs to the amino acid/polyamine transporter 2 family.

It is found in the lysosome membrane. It localises to the cell projection. The protein resides in the axon. The enzyme catalyses L-asparagine(in) + Na(+)(in) = L-asparagine(out) + Na(+)(out). It catalyses the reaction L-glutamine(in) + Na(+)(in) = L-glutamine(out) + Na(+)(out). Its function is as follows. Symporter that selectively cotransports sodium ions and amino acids, such as L-glutamine and L-asparagine from the lysosome into the cytoplasm and may participates in mTORC1 activation. The transport activity requires an acidic lysosomal lumen. The protein is Sodium-coupled neutral amino acid transporter 7 of Danio rerio (Zebrafish).